A 121-amino-acid polypeptide reads, in one-letter code: uncharacterized protein (121 aa).

The protein localises to the mitochondrion. This is an uncharacterized protein from Arabidopsis thaliana (Mouse-ear cress).